The chain runs to 339 residues: Anthranilate phosphoribosyltransferase (339 aa).

Residues Gly79, 82 to 83 (GD), Thr87, 89 to 92 (NIST), 107 to 115 (KHGNRAVSS), and Ser119 contribute to the 5-phospho-alpha-D-ribose 1-diphosphate site. Residue Gly79 participates in anthranilate binding. Ser91 provides a ligand contact to Mg(2+). Asn110 is an anthranilate binding site. Arg165 provides a ligand contact to anthranilate. Residues Asp224 and Glu225 each contribute to the Mg(2+) site.

This sequence belongs to the anthranilate phosphoribosyltransferase family. Homodimer. Requires Mg(2+) as cofactor.

The catalysed reaction is N-(5-phospho-beta-D-ribosyl)anthranilate + diphosphate = 5-phospho-alpha-D-ribose 1-diphosphate + anthranilate. The protein operates within amino-acid biosynthesis; L-tryptophan biosynthesis; L-tryptophan from chorismate: step 2/5. Functionally, catalyzes the transfer of the phosphoribosyl group of 5-phosphorylribose-1-pyrophosphate (PRPP) to anthranilate to yield N-(5'-phosphoribosyl)-anthranilate (PRA). The chain is Anthranilate phosphoribosyltransferase from Geobacillus sp. (strain WCH70).